The chain runs to 298 residues: Small ribosomal subunit protein uS2 (298 aa).

A disordered region spans residues 240–298; it reads AGENWDTQAPGAGVPGSAFAAASAAAATSWEADGGDWAASSAPPAGESWAETQPTEAKW. Residues 248–271 show a composition bias toward low complexity; sequence APGAGVPGSAFAAASAAAATSWEA. Residues 289-298 are compositionally biased toward polar residues; that stretch reads AETQPTEAKW.

It belongs to the universal ribosomal protein uS2 family. Component of the small ribosomal subunit. Mature ribosomes consist of a small (40S) and a large (60S) subunit. The 40S subunit contains about 33 different proteins and 1 molecule of RNA (18S). The 60S subunit contains about 49 different proteins and 3 molecules of RNA (25S, 5.8S and 5S). Interacts with rps21.

Its subcellular location is the cytoplasm. Required for the assembly and/or stability of the 40S ribosomal subunit. Required for the processing of the 20S rRNA-precursor to mature 18S rRNA in a late step of the maturation of 40S ribosomal subunits. The chain is Small ribosomal subunit protein uS2 (rps0) from Aspergillus clavatus (strain ATCC 1007 / CBS 513.65 / DSM 816 / NCTC 3887 / NRRL 1 / QM 1276 / 107).